The primary structure comprises 541 residues: MELTLWTYEGPPHVGAMRIAASMKGVHYVLHAPQGDTYADLLFTMIERRGKRPPVTYTTFQARDLGGDTAELVKRHIREAVERFKPDALLVGESCTAELIQDQPGALAGGMGFDLPIVSLELPAYSKKENWGASETLYQLVRGLLKNQEINSEGHNPKAWQNQGRRPRVNLIGPSLLGFRCRDDVIEISRLLASHGIDVNTVVPLEATVADVMRLTEADLNICLYAEISESCCSWMERQFGMPFSRTMPIGVGATADFLAEVHGLLGMDPPDPREGEHSSKLPWYSASVDSTYLTGKRVFIFGDGSHVLAAARIANEELGFQVVGLGTYSREMARPVRAAAKELGLEALISDDYLAVEAAMAEAVPELVLGTQMERHSAKRLGIPCAVISTPMHVQDVPARFSPQMGWEGANVIFDSWVHPLMMGLEEHLIGMFRHDFEFVDGHQSHLGHLGGLQSAQVEDAPAAIANNSTETHAIEADTSSVAVATATLEWTMDGEAELKKIPFFVRGKVRRNTEAFAKEKGLNQIDSETLYDAKAHYSA.

D36 is a binding site for [4Fe-4S] cluster. Residue D290 is the Proton donor of the active site. Position 425 to 426 (425 to 426 (GL)) interacts with substrate.

This sequence belongs to the ChlB/BchB/BchZ family. In terms of assembly, protochlorophyllide reductase is composed of three subunits; ChlL, ChlN and ChlB. Forms a heterotetramer of two ChlB and two ChlN subunits. [4Fe-4S] cluster is required as a cofactor.

It catalyses the reaction chlorophyllide a + oxidized 2[4Fe-4S]-[ferredoxin] + 2 ADP + 2 phosphate = protochlorophyllide a + reduced 2[4Fe-4S]-[ferredoxin] + 2 ATP + 2 H2O. Its pathway is porphyrin-containing compound metabolism; chlorophyll biosynthesis (light-independent). Functionally, component of the dark-operative protochlorophyllide reductase (DPOR) that uses Mg-ATP and reduced ferredoxin to reduce ring D of protochlorophyllide (Pchlide) to form chlorophyllide a (Chlide). This reaction is light-independent. The NB-protein (ChlN-ChlB) is the catalytic component of the complex. This chain is Light-independent protochlorophyllide reductase subunit B, found in Synechococcus sp. (strain CC9902).